A 150-amino-acid polypeptide reads, in one-letter code: Large ribosomal subunit protein bL9 (150 aa).

Belongs to the bacterial ribosomal protein bL9 family.

Its function is as follows. Binds to the 23S rRNA. The chain is Large ribosomal subunit protein bL9 from Desulforudis audaxviator (strain MP104C).